The sequence spans 733 residues: Photosystem I P700 chlorophyll a apoprotein A2 (733 aa).

8 consecutive transmembrane segments (helical) span residues 46-69 (IFASHFGQLAIIFLWTSGNLFHVA), 135-158 (LYNGSLFLLFVAGLFLFAGWLHLQ), 175-199 (LNHHLSGLFGVSSLAWTGHLVHVAI), 273-291 (MAHHHLAIAVVFIIAGHQY), 330-353 (LHFQLGLALASVGVLCSLTAQHMY), 369-395 (AALYSHHQYIAGFIMCGAFAHGAIFFI), 417-439 (AIISHLSWVSLFLGFHTLGLYVH), and 516-534 (FLVHHAIALGLHTTTLILV). The [4Fe-4S] cluster site is built by Cys-558 and Cys-567. A run of 2 helical transmembrane segments spans residues 574-595 (AFYLAVFWELNTVSWTVFYFHW) and 642-664 (LSVWAWMFLFGHLIYATGFMFLI). Positions 653, 661, and 669 each coordinate chlorophyll a. Trp-670 contacts phylloquinone. The chain crosses the membrane as a helical span at residues 706-726 (LVGLTHFAVGFVLTYAAFVIA).

It belongs to the PsaA/PsaB family. As to quaternary structure, the PsaA/B heterodimer binds the P700 chlorophyll special pair and subsequent electron acceptors. PSI consists of a core antenna complex that captures photons, and an electron transfer chain that converts photonic excitation into a charge separation. The eukaryotic PSI reaction center is composed of at least 11 subunits. P700 is a chlorophyll a/chlorophyll a' dimer, A0 is one or more chlorophyll a, A1 is one or both phylloquinones and FX is a shared 4Fe-4S iron-sulfur center. serves as cofactor.

Its subcellular location is the plastid. It localises to the chloroplast thylakoid membrane. It catalyses the reaction reduced [plastocyanin] + hnu + oxidized [2Fe-2S]-[ferredoxin] = oxidized [plastocyanin] + reduced [2Fe-2S]-[ferredoxin]. In terms of biological role, psaA and PsaB bind P700, the primary electron donor of photosystem I (PSI), as well as the electron acceptors A0, A1 and FX. PSI is a plastocyanin/cytochrome c6-ferredoxin oxidoreductase, converting photonic excitation into a charge separation, which transfers an electron from the donor P700 chlorophyll pair to the spectroscopically characterized acceptors A0, A1, FX, FA and FB in turn. Oxidized P700 is reduced on the lumenal side of the thylakoid membrane by plastocyanin or cytochrome c6. This is Photosystem I P700 chlorophyll a apoprotein A2 from Ostreococcus tauri.